Reading from the N-terminus, the 615-residue chain is Semenogelin-1 (615 aa).

The signal sequence occupies residues 1-23 (MKPIIFLVLSLLLILEKQAAVMG). Gln24 is modified (pyrrolidone carboxylic acid). 3 disordered regions span residues 24-118 (QKGG…EHGK), 133-160 (GHAPHGTQNPSQDQGNSTSGKGISSQDS), and 172-585 (GKEQ…HRSY). Polar residues predominate over residues 34–46 (SESSQFPHGQKGQ). Residues 50 to 80 (ARKDKQHAESKRSVSIEHTYHVDIPDHDQTR) show a composition bias toward basic and acidic residues. Residues 81–91 (TSKQYDLNAQN) are compositionally biased toward polar residues. Over residues 107 to 118 (FNHKQEGREHGK) the composition is skewed to basic and acidic residues. Composition is skewed to polar residues over residues 138–160 (GTQNPSQDQGNSTSGKGISSQDS), 177–196 (SVSGTQRNGTQGGSQSSPVL), and 209–224 (TQNSLQNKGSSPNVNE). Residues Asn148, Asn184, and Asn223 are each glycosylated (N-linked (GlcNAc...) asparagine). Residues 241 to 253 (QEDRLQHGSKDVF) are compositionally biased toward basic and acidic residues. The segment covering 254–265 (SKNQNQTRNPNQ) has biased composition (polar residues). Residues Asn258 and Asn275 are each glycosylated (N-linked (GlcNAc...) asparagine). Residues 283-300 (TEERRPNHGEKGIQKDAS) show a composition bias toward basic and acidic residues. N-linked (GlcNAc...) asparagine glycosylation occurs at Asn306. Residues 308-317 (TEDKMHDKSQ) are compositionally biased toward basic and acidic residues. A glycan (N-linked (GlcNAc...) asparagine) is linked at Asn332. Basic and acidic residues predominate over residues 341-358 (TEERRPNHGEKGIQKDAS). Asn364 is a glycosylation site (N-linked (GlcNAc...) asparagine). Basic and acidic residues predominate over residues 366 to 375 (TEDKMHDKSQ). A glycan (N-linked (GlcNAc...) asparagine) is linked at Asn390. Positions 399-416 (TEERRPNHGEKGIQKDAS) are enriched in basic and acidic residues. Asn422 is a glycosylation site (N-linked (GlcNAc...) asparagine). The span at 424 to 433 (TEDKMHDKSQ) shows a compositional bias: basic and acidic residues. N-linked (GlcNAc...) asparagine glycosylation is present at Asn448. Over residues 457 to 474 (TEERRPNHGEKGIQKDAS) the composition is skewed to basic and acidic residues. Asn480 carries N-linked (GlcNAc...) asparagine glycosylation. Residues 481-491 (KTEDKMHDKSQ) are compositionally biased toward basic and acidic residues. Asn506 is a glycosylation site (N-linked (GlcNAc...) asparagine). Residues 515–532 (TEERRPNHGEKGIQKDAS) are compositionally biased toward basic and acidic residues. The N-linked (GlcNAc...) asparagine glycan is linked to Asn538. Basic and acidic residues predominate over residues 539–549 (KTEDEKHDKSQ). Positions 550–563 (KQVTTPSQDQQSGQ) are enriched in polar residues.

This sequence belongs to the semenogelin family. As to quaternary structure, occurs in disulfide-linked complexes. In terms of processing, transglutaminase substrate. Post-translationally, rapidly cleaved after ejaculation by KLK3/PSA, resulting in liquefaction of the semen coagulum and the progressive release of motile spermatozoa.

The protein localises to the secreted. In terms of biological role, predominant protein in semen. It participates in the formation of a gel matrix entrapping the accessory gland secretions and ejaculated spermatozoa. Fragments of semenogelin and/or fragments of the related proteins may contribute to the activation of progressive sperm movements as the gel-forming proteins are fragmented by KLK3/PSA. The sequence is that of Semenogelin-1 (SEMG1) from Saguinus oedipus (Cotton-top tamarin).